The primary structure comprises 127 residues: MWKPILAIALGSTLGGLLRWGLGLKLNNLFPDVPPGTLVANLIAGYVVGVAIAFFAHMPNLSPEWRLLVITGFCGGLSTFSTFSAEIVSLLQRGLYAWAMSAIAVHVAGSLIMTLAGIATVTWFKSS.

4 helical membrane passes run 4–24 (PILAIALGSTLGGLLRWGLGL), 36–56 (GTLVANLIAGYVVGVAIAFFA), 68–88 (LVITGFCGGLSTFSTFSAEIV), and 98–118 (WAMSAIAVHVAGSLIMTLAGI). Residues G75 and S78 each coordinate Na(+).

It belongs to the fluoride channel Fluc/FEX (TC 1.A.43) family.

The protein localises to the cell inner membrane. It carries out the reaction fluoride(in) = fluoride(out). Its activity is regulated as follows. Na(+) is not transported, but it plays an essential structural role and its presence is essential for fluoride channel function. Functionally, fluoride-specific ion channel. Important for reducing fluoride concentration in the cell, thus reducing its toxicity. This chain is Fluoride-specific ion channel FluC, found in Nitrosomonas europaea (strain ATCC 19718 / CIP 103999 / KCTC 2705 / NBRC 14298).